We begin with the raw amino-acid sequence, 599 residues long: Elongation factor 4 (599 aa).

Residues 5 to 187 (SHIRNFSIIA…RLVHTIPAPV (183 aa)) form the tr-type G domain. Residues 17–22 (DHGKST) and 134–137 (NKMD) each bind GTP.

This sequence belongs to the TRAFAC class translation factor GTPase superfamily. Classic translation factor GTPase family. LepA subfamily.

Its subcellular location is the cell inner membrane. It carries out the reaction GTP + H2O = GDP + phosphate + H(+). Its function is as follows. Required for accurate and efficient protein synthesis under certain stress conditions. May act as a fidelity factor of the translation reaction, by catalyzing a one-codon backward translocation of tRNAs on improperly translocated ribosomes. Back-translocation proceeds from a post-translocation (POST) complex to a pre-translocation (PRE) complex, thus giving elongation factor G a second chance to translocate the tRNAs correctly. Binds to ribosomes in a GTP-dependent manner. This Pseudomonas putida (strain W619) protein is Elongation factor 4.